The chain runs to 454 residues: MTTRIKEIFQTGQPDQSVTVQGWVRTKRELKEFTFLEVNDGSSLANLQVILEPTLPDYENVLKTISTGAAIAVSGNLVPSPGKGQNIELKAAEITLYGDCPPDYPLQKKRHSFEFLRTIAHLRARTNTLGAVMRVRNACATAIHSFFQEKGFIWVHTPIITANDCEGAGELFTVTSLDLKKPANFAEDFFGKRAYLTVSGQLQAEVMAMALSNVYTFGPTFRAENSNTSRHLAEFWMVEPEMAFCDLEGDQDLAEAFLKYIFKFVLENCPEDLQFFNERIDKTVLSTAENIVNSEFGRITYSEAIELLEKADRQFEFPVEWGVDLQSEHERYLAEELFKKPVIVTNYPKTIKAFYMRLDDNNKTVSAMDILAPKIGEIIGGSQREERLDVLIQRMQEQGMNPDDLWWYLDLRRYGSVPHAGFGLGFERLVQFMTGMTNIRDVIPFPRTPLSADF.

This sequence belongs to the class-II aminoacyl-tRNA synthetase family. Homodimer.

It localises to the cytoplasm. It carries out the reaction tRNA(Asn) + L-asparagine + ATP = L-asparaginyl-tRNA(Asn) + AMP + diphosphate + H(+). This Microcystis aeruginosa (strain NIES-843 / IAM M-2473) protein is Asparagine--tRNA ligase.